The chain runs to 644 residues: Zinc transporter ZIP4 (644 aa).

An N-terminal signal peptide occupies residues 1–27; sequence MAILAWLEPRPLLAVLVLVLTMRMAQP. The Extracellular portion of the chain corresponds to 28 to 323; it reads AHLLTLLSSG…QNQLSQAEKY (296 aa). Cystine bridges form between cysteine 59–cysteine 64, cysteine 67–cysteine 103, and cysteine 153–cysteine 188. A disordered region spans residues 231 to 259; sequence TETHSDHHHQEKRVNRQGPTPLTAPNSSS. Residues 233–244 are compositionally biased toward basic and acidic residues; that stretch reads THSDHHHQEKRV. Positions 247–259 are enriched in polar residues; the sequence is QGPTPLTAPNSSS. Cysteines 266 and 305 form a disulfide. The chain crosses the membrane as a helical span at residues 324–344; that stretch reads LYGSLATLLICLCSTFGLLLL. At 345 to 355 the chain is on the cytoplasmic side; the sequence is TCAACSTAAHY. A helical transmembrane segment spans residues 356–376; sequence VIQTFLGMAVGALTGDALLHL. Residues 377 to 404 lie on the Extracellular side of the membrane; sequence TPKVLGLHQHGGDSEHRADSHGPQTTWR. A helical membrane pass occupies residues 405–425; sequence LVVALSGLYVFFLFEKLCDLL. Residues 426–495 are Cytoplasmic-facing; it reads LPQDPEDRKG…KSPELRLLPY (70 aa). The short motif at 449–451 is the Essential for SLC39A4 endocytosis element; the sequence is LQL. Positions 456-467 are enriched in basic and acidic residues; the sequence is LRPPKQPHEGSR. A disordered region spans residues 456 to 484; it reads LRPPKQPHEGSRADLVAEESPELLSPEPR. The chain crosses the membrane as a helical span at residues 496-515; sequence MITLGDGLHNFADGLAVGAA. Zn(2+)-binding residues include histidine 504, asparagine 505, and aspartate 508. Over 516 to 523 the chain is Extracellular; sequence FASSWKTG. Residues 524 to 550 traverse the membrane as a helical segment; it reads LATSLAVFCHEVPHELGDFAALLHAGL. The Zn(2+) site is built by histidine 533, glutamate 534, and histidine 537. Over 551-555 the chain is Cytoplasmic; the sequence is PVSRA. A helical membrane pass occupies residues 556–576; the sequence is LLLNLASGLTAFAGLYVALAL. Residues 577 to 583 are Extracellular-facing; the sequence is GVGEESE. A helical membrane pass occupies residues 584–604; that stretch reads SWTLAVAIGLFLYVALCDMLP. The Cytoplasmic segment spans residues 605 to 614; sequence AMLNVRDPRP. A helical membrane pass occupies residues 615–635; the sequence is WLLFLLHNVGLLGGWAVLLLL. Topologically, residues 636–644 are extracellular; sequence SLYEDSIAL.

Belongs to the ZIP transporter (TC 2.A.5) family. In terms of assembly, homodimer. The extracellular N-terminal ectodomain is cleaved when cells are Zn(2+) deficient, N-terminally cleaved SLC39A4 is internalized at a faster rate. In terms of processing, under excess Zn(2+) conditions, SLC39A4 on the cell surface is rapidly endocytosed, ubiquitinated and degraded. Post-translationally, glycosylated.

The protein resides in the cell membrane. Its subcellular location is the recycling endosome membrane. The protein localises to the apical cell membrane. It carries out the reaction Zn(2+)(in) = Zn(2+)(out). Selective transporter that mediates the uptake of Zn(2+). Plays an essential role for dietary zinc uptake from small intestine. The Zn(2+) uniporter activity is regulated by zinc availability. Also exhibits polyspecific binding and transport of Cu(2+), Cd(2+) and possibly Ni(2+) but at higher concentrations. This chain is Zinc transporter ZIP4, found in Pteropus alecto (Black flying fox).